The primary structure comprises 90 residues: Co-chaperonin GroES (90 aa).

It belongs to the GroES chaperonin family. In terms of assembly, heptamer of 7 subunits arranged in a ring. Interacts with the chaperonin GroEL.

The protein resides in the cytoplasm. Functionally, together with the chaperonin GroEL, plays an essential role in assisting protein folding. The GroEL-GroES system forms a nano-cage that allows encapsulation of the non-native substrate proteins and provides a physical environment optimized to promote and accelerate protein folding. GroES binds to the apical surface of the GroEL ring, thereby capping the opening of the GroEL channel. The polypeptide is Co-chaperonin GroES (Fusobacterium nucleatum subsp. polymorphum (Fusobacterium polymorphum)).